The sequence spans 180 residues: Formate hydrogenlyase subunit 6 (180 aa).

2 4Fe-4S ferredoxin-type domains span residues 31–60 (GKPEQNPQQCIGCAACVNACPSNALTVETD) and 66–95 (LAWEFNLGHCIFCGRCEEVCPTAAIKLSQE). [4Fe-4S] cluster-binding residues include C40, C43, C46, C50, C75, C78, C81, and C85.

FHL comprises of a formate dehydrogenase, unidentified electron carriers and a hydrogenase (isoenzyme 3). In this non-energy conserving pathway, molecular hydrogen and carbodioxide are released from formate.

Its function is as follows. Probable electron transfer protein for hydrogenase 3. The protein is Formate hydrogenlyase subunit 6 (hycF) of Escherichia coli (strain K12).